The primary structure comprises 258 residues: Pimeloyl-[acyl-carrier protein] methyl ester esterase (258 aa).

In terms of domain architecture, AB hydrolase-1 spans 16–244; sequence LVLVHGWGMN…QSSHAPFMTE (229 aa). Substrate is bound by residues Trp-22, 82–83, and 146–150; these read SL and FMALQ. Ser-82 functions as the Nucleophile in the catalytic mechanism. Active-site residues include Asp-210 and His-238. Substrate is bound at residue His-238.

This sequence belongs to the AB hydrolase superfamily. Carboxylesterase BioH family. In terms of assembly, monomer.

The protein localises to the cytoplasm. It carries out the reaction 6-carboxyhexanoyl-[ACP] methyl ester + H2O = 6-carboxyhexanoyl-[ACP] + methanol + H(+). It participates in cofactor biosynthesis; biotin biosynthesis. In terms of biological role, the physiological role of BioH is to remove the methyl group introduced by BioC when the pimeloyl moiety is complete. It allows to synthesize pimeloyl-ACP via the fatty acid synthetic pathway through the hydrolysis of the ester bonds of pimeloyl-ACP esters. This Vibrio atlanticus (strain LGP32) (Vibrio splendidus (strain Mel32)) protein is Pimeloyl-[acyl-carrier protein] methyl ester esterase.